The chain runs to 924 residues: Translation initiation factor IF-2 (924 aa).

Residues P118–L325 are disordered. Composition is skewed to pro residues over residues A150–R173 and I192–S201. Positions A202–G212 are enriched in low complexity. Residues R229–G295 show a composition bias toward gly residues. The segment covering R299–K308 has biased composition (basic residues). The tr-type G domain occupies V420–L591. The G1 stretch occupies residues G429–T436. Residue G429–T436 coordinates GTP. The interval G454–H458 is G2. A G3 region spans residues D479 to G482. Residues D479 to H483 and N533 to D536 contribute to the GTP site. Residues N533 to D536 are G4. A G5 region spans residues S569–K571.

This sequence belongs to the TRAFAC class translation factor GTPase superfamily. Classic translation factor GTPase family. IF-2 subfamily.

The protein resides in the cytoplasm. Its function is as follows. One of the essential components for the initiation of protein synthesis. Protects formylmethionyl-tRNA from spontaneous hydrolysis and promotes its binding to the 30S ribosomal subunits. Also involved in the hydrolysis of GTP during the formation of the 70S ribosomal complex. In Mycobacterium leprae (strain Br4923), this protein is Translation initiation factor IF-2.